A 150-amino-acid chain; its full sequence is 3-dehydroquinate dehydratase (150 aa).

Tyr26 acts as the Proton acceptor in catalysis. The substrate site is built by Asn77, His83, and Asp90. Catalysis depends on His103, which acts as the Proton donor. Residues 104-105 (LS) and Arg114 contribute to the substrate site.

This sequence belongs to the type-II 3-dehydroquinase family. In terms of assembly, homododecamer.

The enzyme catalyses 3-dehydroquinate = 3-dehydroshikimate + H2O. Its pathway is metabolic intermediate biosynthesis; chorismate biosynthesis; chorismate from D-erythrose 4-phosphate and phosphoenolpyruvate: step 3/7. Functionally, catalyzes a trans-dehydration via an enolate intermediate. This Mannheimia succiniciproducens (strain KCTC 0769BP / MBEL55E) protein is 3-dehydroquinate dehydratase.